The chain runs to 244 residues: Uridylate kinase (244 aa).

18–21 (KVSG) lines the ATP pocket. G60 is a binding site for UMP. 2 residues coordinate ATP: G61 and R65. UMP is bound by residues D80 and 141–148 (TGNPFCTT). T168, Q169, Y174, and D177 together coordinate ATP.

It belongs to the UMP kinase family. As to quaternary structure, homohexamer.

The protein localises to the cytoplasm. It carries out the reaction UMP + ATP = UDP + ADP. Its pathway is pyrimidine metabolism; CTP biosynthesis via de novo pathway; UDP from UMP (UMPK route): step 1/1. Its activity is regulated as follows. Inhibited by UTP. In terms of biological role, catalyzes the reversible phosphorylation of UMP to UDP. The polypeptide is Uridylate kinase (Rickettsia typhi (strain ATCC VR-144 / Wilmington)).